A 350-amino-acid polypeptide reads, in one-letter code: MMISERDDFSLTGPLHLTSIDWANEHHRRSVAGSLVQGIYVAERDRQLQREGPELALSPIWSEFFHFRLIRKFVDDADNSIFGGIYEYKLPQQLSQTVKSMEFSPRFVIAFRGTVTKVDSISRDIEHDIHVIRNGLHTTTRFEIAIQAVRNIVASVGGSSVWLAGHSLGASMALLTGKTIARTGFFPECFAFNPPFLSAPIEKIKDKRIKHGIRIAGSVITAGLALAKKATQHYSQNDRALPAPPDPFEALSDWFPRLYVNPGDHLCSEYVGYFEHRNKMEEIGIGFVERVATQHSLGGMLLGGQEPVHLIPSSVLTVNLSSSRDFKQAHGIHQWWREDNKFETKVYQYK.

The protein belongs to the 'GDSL' lipolytic enzyme family.

This is GDSL esterase/lipase At4g10955 from Arabidopsis thaliana (Mouse-ear cress).